The sequence spans 427 residues: MTEAMKITLSTQPADARWGEKATYSINNDGITLHLNGADDLGLIQRAARKIDGLGIKHVQLSGEGWDADRCWAFWQGYKAPKGTRKVEWPDLDDAQRQELDNRLMIIDWVRDTINAPAEELGPSQLAQRAVDLISNVAGDRVTYRITKGEDLREQGYMGLHTVGRASERSPVLLALDYNPTGDKEAPVYACLVGKGITFDSGGYSIKQTAFMDSMKSDMGGAATVTGALAFAITRGLNKRVKLFLCCADNLISGNAFKLGDIITYRNGKKVEVMNTDAEGRLVLADGLIDASAQKPEMIIDAATLTGAAKTALGNDYHALFSFDDALAGRLLASASQENEPFWRLPLAEFHRSQLPSNFAELNNTGSAAYPAGASTAAGFLSHFVENYQQGWLHIDCSATYRKAPVEQWSAGATGLGVRTIANLLTA.

Mn(2+) contacts are provided by Lys195 and Asp200. Residue Lys207 is part of the active site. Mn(2+) is bound by residues Asp218, Asp277, and Glu279. Arg281 is a catalytic residue.

Belongs to the peptidase M17 family. Homohexamer. The cofactor is Mn(2+).

It localises to the cytoplasm. The catalysed reaction is Release of an N-terminal amino acid, Xaa, from a peptide or arylamide. Xaa is preferably Glu or Asp but may be other amino acids, including Leu, Met, His, Cys and Gln.. Its function is as follows. Probably plays an important role in intracellular peptide degradation. In Shigella boydii serotype 18 (strain CDC 3083-94 / BS512), this protein is Peptidase B.